The primary structure comprises 460 residues: 3-isopropylmalate dehydratase large subunit (460 aa).

[4Fe-4S] cluster-binding residues include cysteine 338, cysteine 398, and cysteine 401.

Belongs to the aconitase/IPM isomerase family. LeuC type 1 subfamily. In terms of assembly, heterodimer of LeuC and LeuD. [4Fe-4S] cluster is required as a cofactor.

It carries out the reaction (2R,3S)-3-isopropylmalate = (2S)-2-isopropylmalate. Its pathway is amino-acid biosynthesis; L-leucine biosynthesis; L-leucine from 3-methyl-2-oxobutanoate: step 2/4. In terms of biological role, catalyzes the isomerization between 2-isopropylmalate and 3-isopropylmalate, via the formation of 2-isopropylmaleate. This Streptococcus sanguinis (strain SK36) protein is 3-isopropylmalate dehydratase large subunit.